The chain runs to 165 residues: UPF0179 protein Igni_1272 (165 aa).

Belongs to the UPF0179 family.

The polypeptide is UPF0179 protein Igni_1272 (Ignicoccus hospitalis (strain KIN4/I / DSM 18386 / JCM 14125)).